A 529-amino-acid polypeptide reads, in one-letter code: Bifunctional purine biosynthesis protein PurH (529 aa).

The region spanning 2–149 (TNLVPVGRAL…KNHRFVNVVT (148 aa)) is the MGS-like domain.

This sequence belongs to the PurH family.

The catalysed reaction is (6R)-10-formyltetrahydrofolate + 5-amino-1-(5-phospho-beta-D-ribosyl)imidazole-4-carboxamide = 5-formamido-1-(5-phospho-D-ribosyl)imidazole-4-carboxamide + (6S)-5,6,7,8-tetrahydrofolate. It catalyses the reaction IMP + H2O = 5-formamido-1-(5-phospho-D-ribosyl)imidazole-4-carboxamide. The protein operates within purine metabolism; IMP biosynthesis via de novo pathway; 5-formamido-1-(5-phospho-D-ribosyl)imidazole-4-carboxamide from 5-amino-1-(5-phospho-D-ribosyl)imidazole-4-carboxamide (10-formyl THF route): step 1/1. It functions in the pathway purine metabolism; IMP biosynthesis via de novo pathway; IMP from 5-formamido-1-(5-phospho-D-ribosyl)imidazole-4-carboxamide: step 1/1. In Cereibacter sphaeroides (strain ATCC 17025 / ATH 2.4.3) (Rhodobacter sphaeroides), this protein is Bifunctional purine biosynthesis protein PurH.